The following is a 201-amino-acid chain: Cysteine dioxygenase type 1 (201 aa).

3 residues coordinate Fe cation: His86, His88, and His141. The 3'-(S-cysteinyl)-tyrosine (Cys-Tyr) cross-link spans 93–158 (CFLKLLQGQL…TEPAVSLHLY (66 aa)).

Belongs to the cysteine dioxygenase family. As to quaternary structure, monomer. It depends on Fe cation as a cofactor. Ni(2+) is required as a cofactor. Zn(2+) serves as cofactor. The thioether cross-link between Cys-93 and Tyr-158 plays a structural role through stabilizing the Fe(2+) ion, and prevents the production of highly damaging free hydroxyl radicals by holding the oxygen radical via hydroxyl hydrogen.

The enzyme catalyses L-cysteine + O2 = 3-sulfino-L-alanine + H(+). It functions in the pathway organosulfur biosynthesis; taurine biosynthesis; hypotaurine from L-cysteine: step 1/2. Functionally, catalyzes the oxidation of cysteine to cysteine sulfinic acid with addition of molecular dioxygen. The chain is Cysteine dioxygenase type 1 (cdo1) from Danio rerio (Zebrafish).